We begin with the raw amino-acid sequence, 551 residues long: Ubiquitin domain-containing protein DSK2b (551 aa).

The Ubiquitin-like domain occupies 18–93 (VAVNIRCSNG…IHMVRGSAPS (76 aa)). The segment at 88-127 (RGSAPSSAPPPAPAASQTTAPSVTRGVGSDNSSNLGGASP) is disordered. 2 STI1 domains span residues 143 to 184 (GNAM…QNLM) and 197 to 236 (NPQM…MREM). Residues 294–319 (QGVTTQGSDASNNSSTPNAGTGTIPN) are compositionally biased toward polar residues. Positions 294–336 (QGVTTQGSDASNNSSTPNAGTGTIPNANPLPNPWGATGGQTTA) are disordered. 2 STI1 domains span residues 373–410 (SPLG…MNQL) and 414–449 (NPQL…MQQM). A disordered region spans residues 455 to 475 (SLSQNRNTASQDAGQTGAATG). The segment covering 465–475 (QDAGQTGAATG) has biased composition (low complexity). The UBA domain maps to 504–548 (PPEERYATQLQQLQEMGFYDRAENIRALLATNGNVNAAVERLLGS).

In terms of assembly, interacts with 'Lys-48'-linked polyubiquitin chains via its UBA domain. Interacts with RPN10 via its ubiquitin-like domain. Interacts with PEX2 and PEX12. In terms of tissue distribution, ubiquitous.

Its subcellular location is the nucleus. It is found in the cytoplasm. Its function is as follows. Binds and presumably selects ubiquitin-conjugates for destruction. Prefers multiubiquitin chains rather than single ubiquitins, with a binding affinity for 'Lys-48'-linked ubiquitin chains. Acts as a ubiquitin receptor that associates with the 26S proteasomal docking subunit RPN10 for the indirect recognition of ubiquitinated substrates of ubiquitin/26S proteasome-mediated proteolysis (UPP). The sequence is that of Ubiquitin domain-containing protein DSK2b (DSK2B) from Arabidopsis thaliana (Mouse-ear cress).